We begin with the raw amino-acid sequence, 708 residues long: Protein SUPPRESSOR OF MAX2 1A (708 aa).

The disordered stretch occupies residues 248 to 283 (QMASKPQEKAASPPGSPVRTDLVLGPKQTETTPEKT). The EAR motif lies at 537–541 (FDLNE).

This sequence belongs to the ClpA/ClpB family.

Functionally, probable component of a transcriptional corepressor complex that acts downstream of MAX2 to negatively regulate karrikins/strigolactone responses. Involved in the (-)-germacrene D signaling pathway influencing plant fitness and occurring in the stigma in a KAI2IA-dependent manner. This chain is Protein SUPPRESSOR OF MAX2 1A, found in Petunia hybrida (Petunia).